Reading from the N-terminus, the 272-residue chain is tRNA pseudouridine synthase B (272 aa).

Asp38 acts as the Nucleophile in catalysis.

It belongs to the pseudouridine synthase TruB family. Type 1 subfamily.

It carries out the reaction uridine(55) in tRNA = pseudouridine(55) in tRNA. Responsible for synthesis of pseudouridine from uracil-55 in the psi GC loop of transfer RNAs. The chain is tRNA pseudouridine synthase B from Campylobacter jejuni subsp. jejuni serotype O:2 (strain ATCC 700819 / NCTC 11168).